A 116-amino-acid polypeptide reads, in one-letter code: Large ribosomal subunit protein bL20 (116 aa).

Belongs to the bacterial ribosomal protein bL20 family.

Functionally, binds directly to 23S ribosomal RNA and is necessary for the in vitro assembly process of the 50S ribosomal subunit. It is not involved in the protein synthesizing functions of that subunit. The chain is Large ribosomal subunit protein bL20 from Picosynechococcus sp. (strain ATCC 27264 / PCC 7002 / PR-6) (Agmenellum quadruplicatum).